The primary structure comprises 1139 residues: Solute carrier family 12 member 5 (1139 aa).

2 disordered regions span residues 1 to 63 (MSRR…GKEY) and 92 to 116 (TNLP…KPVQ). Topologically, residues 1-98 (MSRRFTVTSL…ANYTNLPQGS (98 aa)) are cytoplasmic. Positions 19–45 (PDPESRRHSVADPRHLPGEDVKGDGNP) are enriched in basic and acidic residues. The segment covering 46–55 (KESSPFINST) has biased composition (polar residues). Position 57 is a phosphothreonine (Thr-57). Over residues 98–111 (SREHEEAENNEGGK) the composition is skewed to basic and acidic residues. A discontinuously helical membrane pass occupies residues 99–120 (REHEEAENNEGGKKKPVQAPRM). Lys-113 provides a ligand contact to K(+). Residues 121–129 (GTFMGVYLP) are Extracellular-facing. A helical transmembrane segment spans residues 130–151 (CLQNIFGVILFLRLTWVVGIAG). Over 152–174 (IMESFCMVFICCSCTMLTAISMS) the chain is Cytoplasmic. The helical transmembrane segment at 175–203 (AIATNGVVPAGGSYYMISRSLGPEFGGAV) threads the bilayer. Ala-184 serves as a coordination point for chloride. At 204–229 (GLCFYLGTTFAGAMYILGTIEILLAY) the chain is on the extracellular side. 2 helical membrane-spanning segments follow: residues 230–250 (LFPA…AAML) and 251–276 (NNMR…KYVN). Residues 277–402 (KFALVFLGCV…ERSGMTSVGL (126 aa)) lie on the Extracellular side of the membrane. Cysteines 310 and 325 form a disulfide. N-linked (GlcNAc...) asparagine glycosylation is found at Asn-314, Asn-333, Asn-351, and Asn-362. A disulfide bridge links Cys-345 with Cys-354. The helical transmembrane segment at 403 to 420 (ADGTPIDMDHPYVFSDMT) threads the bilayer. Met-410 lines the K(+) pocket. Chloride is bound by residues Tyr-414 and Val-415. Residues 421 to 429 (SYFTLLVGI) are Cytoplasmic-facing. A helical transmembrane segment spans residues 430-453 (YFPSVTGIMAGSNRSGDLRDAQKS). Asp-446 lines the K(+) pocket. Topologically, residues 454–485 (IPTGTILAIATTSAVYISSVVLFGACIEGVVL) are extracellular. Residues 486–513 (RDKFGEAVNGNLVVGTLAWPSPWVIVIG) traverse the membrane as a helical segment. Topologically, residues 514 to 534 (SFFSTCGAGLQSLTGAPRLLQ) are cytoplasmic. 2 helical membrane passes run 535-555 (AISR…KANG) and 556-578 (EPTW…ASLD). Glu-569 provides a ligand contact to chloride. Residues 579–592 (EVAPILSMFFLMCY) are Cytoplasmic-facing. The next 2 helical transmembrane spans lie at 593–615 (MFVN…PRFR) and 616–632 (YYHW…CLAL). Residues 633–1139 (MFICSWYYAL…GGREVITIYS (507 aa)) lie on the Cytoplasmic side of the membrane. Positions 667 to 681 (GIRGLSLSAARYALL) are scissor helix. Thr-929 is subject to Phosphothreonine; by OXSR1 and STK39. The tract at residues 942 to 1052 (MHLTKNERER…GPSPVSSEGI (111 aa)) is disordered. A compositionally biased stretch (basic and acidic residues) spans 945-962 (TKNEREREIQSITDESRG). A compositionally biased stretch (acidic residues) spans 982–994 (TAGDSEEKPEEEV). Positions 1003–1012 (PSCPSSSPSP) are enriched in low complexity. A compositionally biased stretch (basic and acidic residues) spans 1023-1042 (DPEKVHLTWTKDKSVAEKNK). Thr-1030 is subject to Phosphothreonine; by OXSR1 and STK39. A phosphoserine mark is found at Ser-1045, Ser-1048, and Ser-1049.

It belongs to the SLC12A transporter family. K/Cl co-transporter subfamily. As to quaternary structure, homodimer; adopts a domain-swap conformation at the scissor helices connecting the transmembrane domain and C-terminal domain. Heterodimer with K-Cl cotransporters SLC12A6 and SLC12A7. Interacts with AP2A1. Phosphorylated at Thr-929 and Thr-1030 by OXSR1/OSR1 and STK39/SPAK downstream of WNK kinases (WNK1, WNK2, WNK3 or WNK4), inhibiting the potassium-chloride cotransport activity. As to expression, brain specific. Detected in neuronal cells.

It localises to the cell membrane. Its subcellular location is the cell projection. The protein localises to the dendrite. The catalysed reaction is K(+)(in) + chloride(in) = K(+)(out) + chloride(out). Its activity is regulated as follows. Inhibited following phosphorylation by OXSR1/OSR1 and STK39/SPAK: phosphorylation takes place downstream of WNK kinases (WNK1, WNK2, WNK3 or WNK4) in response to hyperosmotic stress and subsequent cell shrinkage. In terms of biological role, mediates electroneutral potassium-chloride cotransport in mature neurons and is required for neuronal Cl(-) homeostasis. As major extruder of intracellular chloride, it establishes the low neuronal Cl(-) levels required for chloride influx after binding of GABA-A and glycine to their receptors, with subsequent hyperpolarization and neuronal inhibition. Involved in the regulation of dendritic spine formation and maturation. This Homo sapiens (Human) protein is Solute carrier family 12 member 5.